A 208-amino-acid polypeptide reads, in one-letter code: Ubiquitin-conjugating enzyme E2 S (208 aa).

The UBC core domain maps to 14–160; the sequence is QTIRQVMKEL…ARMMTEIHAQ (147 aa). Cysteine 98 (glycyl thioester intermediate) is an active-site residue. A disordered region spans residues 161 to 196; it reads PAKCGAGASDAKDDDGPSTKKHAGVDKKLQDKKKEK. A compositionally biased stretch (basic and acidic residues) spans 170-196; that stretch reads DAKDDDGPSTKKHAGVDKKLQDKKKEK.

This sequence belongs to the ubiquitin-conjugating enzyme family.

It catalyses the reaction S-ubiquitinyl-[E1 ubiquitin-activating enzyme]-L-cysteine + [E2 ubiquitin-conjugating enzyme]-L-cysteine = [E1 ubiquitin-activating enzyme]-L-cysteine + S-ubiquitinyl-[E2 ubiquitin-conjugating enzyme]-L-cysteine.. It participates in protein modification; protein ubiquitination. Functionally, catalyzes the covalent attachment of ubiquitin to other proteins. Acts as an essential factor of the anaphase promoting complex/cyclosome (APC/C), a cell cycle-regulated ubiquitin ligase that controls progression through mitosis. Acts by specifically elongating polyubiquitin chains initiated by the E2 enzyme vih/UbcH10 on APC/C substrates, enhancing the degradation of APC/C substrates by the proteasome and promoting mitotic exit. The protein is Ubiquitin-conjugating enzyme E2 S of Drosophila grimshawi (Hawaiian fruit fly).